The primary structure comprises 838 residues: Transforming acidic coiled-coil-containing protein 3 (838 aa).

Ser2 bears the N-acetylserine mark. Residues Ser25, Ser39, and Ser71 each carry the phosphoserine modification. Residues Glu123–Glu227 form a disordered region. Low complexity predominate over residues Ala132–Ser164. 2 positions are modified to phosphoserine: Ser175 and Ser177. The span at Asp204–Glu227 shows a compositional bias: basic and acidic residues. Residues Ser250, Ser317, and Ser402 each carry the phosphoserine modification. The interval Gly311–Asp527 is disordered. Over residues Tyr403–Asp412 the composition is skewed to basic and acidic residues. At Ser434 the chain carries Phosphoserine. Over residues Asn492 to Pro503 the composition is skewed to polar residues. Positions Glu522 to Val577 are necessary but not sufficient for spindle localization. The residue at position 558 (Ser558) is a Phosphoserine; by AURKA. The interval Asp569–Arg594 is disordered. Residues Thr579–Pro591 show a composition bias toward polar residues. The necessary but not sufficient for spindle localization stretch occupies residues Arg594–Ile838. Residues Leu637–Lys837 are a coiled coil.

Belongs to the TACC family. Interacts with microtubules. Interacts with CKAP5 independently of clathrin. Interacts with CKAP5 and clathrin forming the TACC3/ch-TOG/clathrin complex located at spindle inter-microtubules bridges; TACC3 (phosphorylated at Ser-558 by AURKA) and CLTC are proposed to form a composite microtubule interaction surface. Interacts with CCDC100/CEP120. The coiled coil C-terminal region interacts with AH receptor nuclear translocator protein (ARNT) and ARNT2. Interacts with GCN5L2 and PCAF.

The protein resides in the cytoplasm. Its subcellular location is the cytoskeleton. The protein localises to the microtubule organizing center. It localises to the centrosome. It is found in the spindle. The protein resides in the spindle pole. Functionally, plays a role in the microtubule-dependent coupling of the nucleus and the centrosome. Involved in the processes that regulate centrosome-mediated interkinetic nuclear migration (INM) of neural progenitors. Acts as a component of the TACC3/ch-TOG/clathrin complex proposed to contribute to stabilization of kinetochore fibers of the mitotic spindle by acting as inter-microtubule bridge. The TACC3/ch-TOG/clathrin complex is required for the maintenance of kinetochore fiber tension. May be involved in the control of cell growth and differentiation. May contribute to cancer. The sequence is that of Transforming acidic coiled-coil-containing protein 3 (TACC3) from Homo sapiens (Human).